A 310-amino-acid polypeptide reads, in one-letter code: GPN-loop GTPase 2 (310 aa).

Ala-2 bears the N-acetylalanine mark. 19–24 (GSGKTT) serves as a coordination point for GTP. A Gly-Pro-Asn (GPN)-loop; involved in dimer interface motif is present at residues 76–78 (GPN). 178-181 (SKMD) provides a ligand contact to GTP.

Belongs to the GPN-loop GTPase family. In terms of assembly, heterodimers with GPN1 or GPN3. Binds to RNA polymerase II (RNAPII).

In terms of biological role, small GTPase required for proper localization of RNA polymerase II and III (RNAPII and RNAPIII). May act at an RNAP assembly step prior to nuclear import. This chain is GPN-loop GTPase 2, found in Rattus norvegicus (Rat).